The chain runs to 84 residues: Protein Tlp homolog (84 aa).

Residues 1 to 20 (MGKEERYTKKPKPDDRSDNV) form a disordered region.

It belongs to the Tlp family.

The polypeptide is Protein Tlp homolog (Caldanaerobacter subterraneus subsp. tengcongensis (strain DSM 15242 / JCM 11007 / NBRC 100824 / MB4) (Thermoanaerobacter tengcongensis)).